Reading from the N-terminus, the 513-residue chain is Chromosomal replication initiator protein DnaA (513 aa).

The segment at 1–87 is domain I, interacts with DnaA modulators; the sequence is MSVELWQQCV…IGSKRSSAPR (87 aa). The segment at 87–176 is domain II; sequence RAAPNAPLAA…QVEGALKHTS (90 aa). The disordered stretch occupies residues 113 to 163; that stretch reads AAPAPAPAPTSAPAKKAAAQKAAEVSEEPSRDSFDPMAGASSQQAPVRAEQ. Low complexity predominate over residues 123 to 135; that stretch reads SAPAKKAAAQKAA. The tract at residues 177–393 is domain III, AAA+ region; it reads YLNRTFTFEN…GALKRVIAHS (217 aa). Positions 221, 223, 224, and 225 each coordinate ATP. The tract at residues 394–513 is domain IV, binds dsDNA; that stretch reads HFMGRDITIE…YKNLLRTLTT (120 aa).

It belongs to the DnaA family. As to quaternary structure, oligomerizes as a right-handed, spiral filament on DNA at oriC.

The protein resides in the cytoplasm. Functionally, plays an essential role in the initiation and regulation of chromosomal replication. ATP-DnaA binds to the origin of replication (oriC) to initiate formation of the DNA replication initiation complex once per cell cycle. Binds the DnaA box (a 9 base pair repeat at the origin) and separates the double-stranded (ds)DNA. Forms a right-handed helical filament on oriC DNA; dsDNA binds to the exterior of the filament while single-stranded (ss)DNA is stabiized in the filament's interior. The ATP-DnaA-oriC complex binds and stabilizes one strand of the AT-rich DNA unwinding element (DUE), permitting loading of DNA polymerase. After initiation quickly degrades to an ADP-DnaA complex that is not apt for DNA replication. Binds acidic phospholipids. This Pseudomonas fluorescens (strain ATCC BAA-477 / NRRL B-23932 / Pf-5) protein is Chromosomal replication initiator protein DnaA.